Reading from the N-terminus, the 300-residue chain is 3-methyl-2-oxobutanoate hydroxymethyltransferase (300 aa).

Mg(2+) contacts are provided by Asp-75 and Asp-118. 3-methyl-2-oxobutanoate is bound by residues 75–76 (DS), Asp-118, and Lys-147. Glu-149 contacts Mg(2+). Glu-216 functions as the Proton acceptor in the catalytic mechanism.

This sequence belongs to the PanB family. As to quaternary structure, homodecamer; pentamer of dimers. Mg(2+) serves as cofactor.

The protein resides in the cytoplasm. It catalyses the reaction 3-methyl-2-oxobutanoate + (6R)-5,10-methylene-5,6,7,8-tetrahydrofolate + H2O = 2-dehydropantoate + (6S)-5,6,7,8-tetrahydrofolate. It functions in the pathway cofactor biosynthesis; (R)-pantothenate biosynthesis; (R)-pantoate from 3-methyl-2-oxobutanoate: step 1/2. Catalyzes the reversible reaction in which hydroxymethyl group from 5,10-methylenetetrahydrofolate is transferred onto alpha-ketoisovalerate to form ketopantoate. The protein is 3-methyl-2-oxobutanoate hydroxymethyltransferase of Verminephrobacter eiseniae (strain EF01-2).